Consider the following 617-residue polypeptide: Sodium-dependent noradrenaline transporter (617 aa).

Residues 1–23 (MLLARMNPQVQPENNGADTGPEQ) are disordered. Residues 1-62 (MLLARMNPQV…AQPRETWGKK (62 aa)) lie on the Cytoplasmic side of the membrane. The segment covering 8–17 (PQVQPENNGA) has biased composition (polar residues). A helical membrane pass occupies residues 63-88 (IDFLLSVVGFAVDLANVWRFPYLCYK). Na(+) is bound by residues G71, A73, and V74. (R)-noradrenaline is bound at residue D75. D75 provides a ligand contact to dopamine. Position 78 (N78) interacts with Na(+). Positions 87 and 88 each coordinate (R)-noradrenaline. The Extracellular segment spans residues 89-92 (NGGG). Residues 93–116 (AFLIPYTLFLIIAGMPLFYMELAL) form a helical membrane-spanning segment. At 117 to 135 (GQYNREGAATVWKICPFFK) the chain is on the cytoplasmic side. Residues 136 to 166 (GVGYAVILIALYVGFYYNVIIAWSLYYLFSS) form a helical membrane-spanning segment. Residues A145 and G149 each coordinate (R)-noradrenaline. A145 is a binding site for dopamine. Topologically, residues 167 to 233 (FTLNLPWTDC…SSGIHDIGLP (67 aa)) are extracellular. C176 and C185 form a disulfide bridge. Residues N184, N192, and N198 are each glycosylated (N-linked (GlcNAc...) asparagine). A helical membrane pass occupies residues 234–254 (QWQLLLCLMVVVIVLYFSLWK). Residues 255–257 (GVK) lie on the Cytoplasmic side of the membrane. Residues 258-282 (TSGKVVWITATLPYFVLFVLLVHGV) traverse the membrane as a helical segment. Residues 283-306 (TLPGASNGINAYLHIDFYRLKEAT) lie on the Extracellular side of the membrane. The chain crosses the membrane as a helical span at residues 307-332 (VWIDAATQIFFSLGAGFGVLIAFASY). (R)-noradrenaline is bound at residue F317. Position 317 (F317) interacts with dopamine. Residue S318 coordinates Na(+). The Cytoplasmic portion of the chain corresponds to 333–338 (NKFDNN). The helical transmembrane segment at 339-362 (CYRDALLTSSINCITSFVSGFAIF) threads the bilayer. Na(+) is bound at residue N350. Residues 363–402 (SILGYMAHEHKVNIEDVATEGAGLVFILYPEAISTLSGST) are Extracellular-facing. Residue E382 coordinates (R)-noradrenaline. E382 serves as a coordination point for dopamine. Residues 403 to 428 (FWAVVFFVMLLALGLDSSMGGMEAVI) form a helical membrane-spanning segment. The Na(+) site is built by D418 and S419. Topologically, residues 429 to 443 (TGLADDFQVLKRHRK) are cytoplasmic. The chain crosses the membrane as a helical span at residues 444–464 (LFTFGVTFSTFLLALFCITKG). Position 465 (G465) is a topological domain, extracellular. A helical transmembrane segment spans residues 466–492 (IYVLTLLDTFAAGTSILFAVLMEAIGV). Topologically, residues 493-522 (SWFYGVDRFSNDIQQMMGFRPGLYWRLCWK) are cytoplasmic. A helical membrane pass occupies residues 523–545 (FVSPAFLLFVVVVSIINFKPLTY). Over 546 to 548 (DDY) the chain is Extracellular. The helical transmembrane segment at 549-569 (IFPPWANWVGWGIALSSMVLV) threads the bilayer. Residues 570 to 617 (PIYVIYKFLSTQGSLWERLAYGITPENEHHLVAQRDIRQFQLQHWLAI) lie on the Cytoplasmic side of the membrane.

This sequence belongs to the sodium:neurotransmitter symporter (SNF) (TC 2.A.22) family. SLC6A2 subfamily. In terms of assembly, monomer. Can form homodimers in the cell membrane; homodimerization is mostly mediated by cholesterol and lipids, and regulates neurotransmitter transport activity. Interacts with PRKCABP. Post-translationally, palmitoylated; palmitoylation regulates protein levels and neurotransmitter transport.

It is found in the cell membrane. It localises to the cell projection. The protein localises to the axon. The protein resides in the synapse. Its subcellular location is the synaptosome. It catalyses the reaction (R)-noradrenaline(out) + chloride(out) + Na(+)(out) = (R)-noradrenaline(in) + chloride(in) + Na(+)(in). It carries out the reaction dopamine(out) + chloride(out) + Na(+)(out) = dopamine(in) + chloride(in) + Na(+)(in). The catalysed reaction is dopamine(out) + chloride(out) + 2 Na(+)(out) = dopamine(in) + chloride(in) + 2 Na(+)(in). Inhibited by mazindol, desipramine, nomifensine and nortriptyline. Mediates sodium- and chloride-dependent transport of norepinephrine (also known as noradrenaline), the primary signaling neurotransmitter in the autonomic sympathetic nervous system. Is responsible for norepinephrine re-uptake and clearance from the synaptic cleft, thus playing a crucial role in norepinephrine inactivation and homeostasis. Can also mediate sodium- and chloride-dependent transport of dopamine. The polypeptide is Sodium-dependent noradrenaline transporter (Homo sapiens (Human)).